The chain runs to 328 residues: NADH-quinone oxidoreductase subunit H (328 aa).

The next 8 membrane-spanning stretches (helical) occupy residues 8 to 28 (VAAIAFALFQAVVILLAAVGA), 81 to 101 (GLFVLAPAIAMASLLLSFMVI), 114 to 134 (IGLLFFFAMAGINVYAVLFAG), 154 to 174 (LSYEVFMGLSLMGVVAMAGSF), 186 to 206 (LWFIVPQFFGFCTFLVAGIAV), 237 to 257 (FFVGEYVGIVLVSALMVTLFL), 265 to 285 (LPPIVWFLLKTAVFVGFFILL), and 304 to 324 (VCLPLTLINLLVTGALILIFS).

The protein belongs to the complex I subunit 1 family. NDH-1 is composed of 14 different subunits. Subunits NuoA, H, J, K, L, M, N constitute the membrane sector of the complex.

It is found in the cell inner membrane. The enzyme catalyses a quinone + NADH + 5 H(+)(in) = a quinol + NAD(+) + 4 H(+)(out). Functionally, NDH-1 shuttles electrons from NADH, via FMN and iron-sulfur (Fe-S) centers, to quinones in the respiratory chain. The immediate electron acceptor for the enzyme in this species is believed to be ubiquinone. Couples the redox reaction to proton translocation (for every two electrons transferred, four hydrogen ions are translocated across the cytoplasmic membrane), and thus conserves the redox energy in a proton gradient. This subunit may bind ubiquinone. The sequence is that of NADH-quinone oxidoreductase subunit H from Chromohalobacter salexigens (strain ATCC BAA-138 / DSM 3043 / CIP 106854 / NCIMB 13768 / 1H11).